A 757-amino-acid polypeptide reads, in one-letter code: Probable tRNA (uracil-O(2)-)-methyltransferase (757 aa).

2 disordered regions span residues 55–93 (EARG…GPEQ) and 108–138 (QQEE…GDFP). Over residues 72–84 (PGPGQGSPGGGPG) the composition is skewed to gly residues. The residue at position 78 (Ser-78) is a Phosphoserine. A compositionally biased stretch (basic and acidic residues) spans 123–136 (DSGHPGHAEGREGD). At Ser-533 the chain carries Phosphoserine. The C3H1-type zinc-finger motif lies at 713–743 (ACKTRLCWFFMHHPDGCALSTDCCPFAHGPA).

The protein belongs to the TRM44 family.

It localises to the cytoplasm. It catalyses the reaction uridine(44) in tRNA(Ser) + S-adenosyl-L-methionine = 2'-O-methyluridine(44) in tRNA(Ser) + S-adenosyl-L-homocysteine + H(+). Its function is as follows. Probable adenosyl-L-methionine (AdoMet)-dependent tRNA (uracil-O(2)-)-methyltransferase. The protein is Probable tRNA (uracil-O(2)-)-methyltransferase (TRMT44) of Homo sapiens (Human).